We begin with the raw amino-acid sequence, 194 residues long: NADH-quinone oxidoreductase subunit B (194 aa).

Polar residues predominate over residues 1-11 (MGMSQNNSTLV). Residues 1 to 22 (MGMSQNNSTLVAPQPKGIIDPA) form a disordered region. [4Fe-4S] cluster is bound by residues Cys-72, Cys-73, Cys-138, and Cys-168.

It belongs to the complex I 20 kDa subunit family. NDH-1 is composed of 14 different subunits. Subunits NuoB, C, D, E, F, and G constitute the peripheral sector of the complex. [4Fe-4S] cluster is required as a cofactor.

Its subcellular location is the cell inner membrane. The catalysed reaction is a quinone + NADH + 5 H(+)(in) = a quinol + NAD(+) + 4 H(+)(out). In terms of biological role, NDH-1 shuttles electrons from NADH, via FMN and iron-sulfur (Fe-S) centers, to quinones in the respiratory chain. The immediate electron acceptor for the enzyme in this species is believed to be ubiquinone. Couples the redox reaction to proton translocation (for every two electrons transferred, four hydrogen ions are translocated across the cytoplasmic membrane), and thus conserves the redox energy in a proton gradient. The polypeptide is NADH-quinone oxidoreductase subunit B (Agrobacterium fabrum (strain C58 / ATCC 33970) (Agrobacterium tumefaciens (strain C58))).